Reading from the N-terminus, the 151-residue chain is UPF0208 membrane protein SG1605 (151 aa).

Helical transmembrane passes span 46 to 64 (FGVR…WQIA) and 70 to 90 (GPAV…LWWL).

Belongs to the UPF0208 family.

It localises to the cell inner membrane. The polypeptide is UPF0208 membrane protein SG1605 (Sodalis glossinidius (strain morsitans)).